The following is a 205-amino-acid chain: Methylthioribulose-1-phosphate dehydratase (205 aa).

His96 and His98 together coordinate Zn(2+).

It belongs to the aldolase class II family. MtnB subfamily. Zn(2+) serves as cofactor.

The enzyme catalyses 5-(methylsulfanyl)-D-ribulose 1-phosphate = 5-methylsulfanyl-2,3-dioxopentyl phosphate + H2O. It functions in the pathway amino-acid biosynthesis; L-methionine biosynthesis via salvage pathway; L-methionine from S-methyl-5-thio-alpha-D-ribose 1-phosphate: step 2/6. In terms of biological role, catalyzes the dehydration of methylthioribulose-1-phosphate (MTRu-1-P) into 2,3-diketo-5-methylthiopentyl-1-phosphate (DK-MTP-1-P). The sequence is that of Methylthioribulose-1-phosphate dehydratase from Exiguobacterium sp. (strain ATCC BAA-1283 / AT1b).